The primary structure comprises 387 residues: Putative gustatory receptor 22d (387 aa).

Topologically, residues 1-43 (MFRPRCGLRQKFVYVILKSILYSSWLLGIFPFKYEPKKRRLRR) are cytoplasmic. The chain crosses the membrane as a helical span at residues 44–64 (SMWLILFGVVISSSLLILMVK). Topologically, residues 65–82 (QSAEDREHGIMLDVFQRN) are extracellular. Residues 83–103 (ALLYQISSLMGVVGVVSICTV) form a helical membrane-spanning segment. Over 104–142 (HLRTLWRSKHLEEIYNGLMLLEAKYFCSNAVECPAFDGY) the chain is Cytoplasmic. Residues 143–163 (VIQKGVVIVVGLLAPWMVHFG) form a helical membrane-spanning segment. Residues 164–184 (MPDSKLPVLNVLVVSMVKLGT) are Extracellular-facing. The chain crosses the membrane as a helical span at residues 185–205 (LLLALHYHLGVVIIYRFVWLI). At 206–252 (NRELLSLVCSLRGNHKGSSSRVRFLLKLYNKLVNLYSKLADCYDCQT) the chain is on the cytoplasmic side. A helical membrane pass occupies residues 253-273 (VLMMAIFLAANIIVCFYMIVY). The Extracellular portion of the chain corresponds to 274 to 281 (RISLSKMS). Residues 282-302 (FFVMLIMFPLAIANNFMDFWL) traverse the membrane as a helical segment. Over 303–363 (SMKVCDLLQK…HCGLFHVNRE (61 aa)) the chain is Cytoplasmic. Residues 364–384 (MGFKMFVASVLYLLYLVQFDY) form a helical membrane-spanning segment. The Extracellular segment spans residues 385 to 387 (MNL).

Belongs to the insect chemoreceptor superfamily. Gustatory receptor (GR) family. Gr22e subfamily. Expressed in neurons of the dorsal pharyngeal sense organs of larvae.

It localises to the cell membrane. Functionally, probable gustatory receptor which mediates acceptance or avoidance behavior, depending on its substrates. The sequence is that of Putative gustatory receptor 22d from Drosophila melanogaster (Fruit fly).